The sequence spans 69 residues: Large ribosomal subunit protein bL32c (69 aa).

This sequence belongs to the bacterial ribosomal protein bL32 family.

Its subcellular location is the plastid. The protein localises to the chloroplast. This is Large ribosomal subunit protein bL32c (rpl32) from Marchantia polymorpha (Common liverwort).